A 201-amino-acid polypeptide reads, in one-letter code: uncharacterized protein (201 aa).

The N-terminal stretch at 1–23 is a signal peptide; sequence MKILYFIFVIIINILLILNHVKS. Residues 24 to 178 lie on the Extracellular side of the membrane; it reads KYNTFIFENT…GNYGEDPQRN (155 aa). 2 N-linked (GlcNAc...) asparagine glycosylation sites follow: Asn-114 and Asn-134. The disordered stretch occupies residues 122–157; it reads TPETPSPTENAPNTSGGSSEGNHYTYKSSSSSSEHI. Residues 123–148 are compositionally biased toward polar residues; sequence PETPSPTENAPNTSGGSSEGNHYTYK. A helical transmembrane segment spans residues 179–199; sequence IGISLSSSLIFISILFLIIFI. Topologically, residues 200 to 201 are cytoplasmic; sequence NN.

Its subcellular location is the membrane. This is an uncharacterized protein from Dictyostelium discoideum (Social amoeba).